Consider the following 73-residue polypeptide: Large ribosomal subunit protein bL31 (73 aa).

This sequence belongs to the bacterial ribosomal protein bL31 family. Type A subfamily. Part of the 50S ribosomal subunit.

Binds the 23S rRNA. In Cereibacter sphaeroides (strain ATCC 17029 / ATH 2.4.9) (Rhodobacter sphaeroides), this protein is Large ribosomal subunit protein bL31.